The sequence spans 542 residues: CTP synthase (542 aa).

Residues Met1–Met265 are amidoligase domain. Residue Ser13 participates in CTP binding. Residue Ser13 coordinates UTP. ATP contacts are provided by residues Ser14 to Leu19 and Asp71. Asp71 and Glu139 together coordinate Mg(2+). CTP is bound by residues Asp146–Glu148, Lys186–Gln191, and Lys222. Residues Lys186–Gln191 and Lys222 contribute to the UTP site. Arg238 to Val240 lines the ATP pocket. The Glutamine amidotransferase type-1 domain maps to Thr291–Leu541. Gly353 provides a ligand contact to L-glutamine. Cys380 acts as the Nucleophile; for glutamine hydrolysis in catalysis. L-glutamine contacts are provided by residues Phe381–Gln384, Glu404, and Arg469. Active-site residues include His514 and Glu516.

The protein belongs to the CTP synthase family. Homotetramer.

The catalysed reaction is UTP + L-glutamine + ATP + H2O = CTP + L-glutamate + ADP + phosphate + 2 H(+). The enzyme catalyses L-glutamine + H2O = L-glutamate + NH4(+). It catalyses the reaction UTP + NH4(+) + ATP = CTP + ADP + phosphate + 2 H(+). The protein operates within pyrimidine metabolism; CTP biosynthesis via de novo pathway; CTP from UDP: step 2/2. With respect to regulation, allosterically activated by GTP, when glutamine is the substrate; GTP has no effect on the reaction when ammonia is the substrate. The allosteric effector GTP functions by stabilizing the protein conformation that binds the tetrahedral intermediate(s) formed during glutamine hydrolysis. Inhibited by the product CTP, via allosteric rather than competitive inhibition. In terms of biological role, catalyzes the ATP-dependent amination of UTP to CTP with either L-glutamine or ammonia as the source of nitrogen. Regulates intracellular CTP levels through interactions with the four ribonucleotide triphosphates. The protein is CTP synthase of Methylorubrum populi (strain ATCC BAA-705 / NCIMB 13946 / BJ001) (Methylobacterium populi).